Consider the following 674-residue polypeptide: DNA ligase (674 aa).

NAD(+) is bound by residues 31-35 (DYEYD), 80-81 (SL), and Glu-110. Lys-112 functions as the N6-AMP-lysine intermediate in the catalytic mechanism. NAD(+) is bound by residues Arg-133, Glu-167, Lys-283, and Lys-307. Cys-401, Cys-404, Cys-419, and Cys-424 together coordinate Zn(2+). Positions 584–673 (KVEKIFEGMK…SKDEVKAVLE (90 aa)) constitute a BRCT domain.

It belongs to the NAD-dependent DNA ligase family. LigA subfamily. The cofactor is Mg(2+). Mn(2+) serves as cofactor.

The catalysed reaction is NAD(+) + (deoxyribonucleotide)n-3'-hydroxyl + 5'-phospho-(deoxyribonucleotide)m = (deoxyribonucleotide)n+m + AMP + beta-nicotinamide D-nucleotide.. Its function is as follows. DNA ligase that catalyzes the formation of phosphodiester linkages between 5'-phosphoryl and 3'-hydroxyl groups in double-stranded DNA using NAD as a coenzyme and as the energy source for the reaction. It is essential for DNA replication and repair of damaged DNA. In Clostridioides difficile (strain 630) (Peptoclostridium difficile), this protein is DNA ligase.